We begin with the raw amino-acid sequence, 399 residues long: Maltose excess protein 1-like, chloroplastic (399 aa).

The N-terminal 67 residues, 1-67 (MSSSVSSVRL…RRRRYALPPV (67 aa)), are a transit peptide targeting the chloroplast. 9 helical membrane passes run 93 to 113 (FAGAANVPFLLLQLPQIILNA), 123 to 143 (ALFAVPWLGMLTGLLGNLSLL), 154 to 174 (AVIVQTLGVISTYVVIAQLAM), 180 to 202 (LPQFVATSAVVAAGLLLNFLNYF), 217 to 237 (ITIGGLAVLPQVMWSTFVPFI), 238 to 258 (PNSLLPGIISGSLAATAVVMA), 268 to 288 (INFVGSLSGWTATLLFMWMPV), 306 to 326 (AFTMLLAMIGNGLMIPRAVFI), and 361 to 381 (FLATTFGLLLWLGFTLWRDTI).

It localises to the plastid. The protein localises to the chloroplast inner membrane. Probable maltose transporter. Essential for the conversion of starch to sucrose in leaves at night, probably via the export of maltose from the chloroplast. The protein is Maltose excess protein 1-like, chloroplastic of Oryza sativa subsp. japonica (Rice).